The primary structure comprises 300 residues: Polyamine aminopropyltransferase (300 aa).

Residues 4 to 237 enclose the PABS domain; it reads WHWHIEWQTP…GLWGFVYASD (234 aa). S-methyl-5'-thioadenosine is bound at residue Q33. The spermidine site is built by H64 and E88. S-methyl-5'-thioadenosine is bound by residues D108 and 140-141; that span reads DG. Catalysis depends on D158, which acts as the Proton acceptor. P167 is a binding site for S-methyl-5'-thioadenosine.

It belongs to the spermidine/spermine synthase family. In terms of assembly, homodimer or homotetramer.

Its subcellular location is the cytoplasm. The enzyme catalyses S-adenosyl 3-(methylsulfanyl)propylamine + putrescine = S-methyl-5'-thioadenosine + spermidine + H(+). Its pathway is amine and polyamine biosynthesis; spermidine biosynthesis; spermidine from putrescine: step 1/1. In terms of biological role, catalyzes the irreversible transfer of a propylamine group from the amino donor S-adenosylmethioninamine (decarboxy-AdoMet) to putrescine (1,4-diaminobutane) to yield spermidine. This is Polyamine aminopropyltransferase from Sulfurisphaera tokodaii (strain DSM 16993 / JCM 10545 / NBRC 100140 / 7) (Sulfolobus tokodaii).